We begin with the raw amino-acid sequence, 539 residues long: NADH-quinone oxidoreductase subunit N 2 (539 aa).

13 helical membrane-spanning segments follow: residues 11–31 (LIPE…DVLT), 52–72 (LMGL…FSWM), 106–126 (PLTH…VILT), 141–161 (LILF…LIMI), 193–213 (YIFG…LLGL), 248–268 (GVAI…VAIV), 296–316 (AGFF…SILG), 329–349 (WTSL…LAAL), 357–377 (MLAY…VGTQ), 385–405 (LMYL…LALV), 429–449 (LLLT…GFFV), 462–484 (AKWL…LRFL), and 500–520 (VGFG…GLGI).

It belongs to the complex I subunit 2 family. In terms of assembly, NDH-1 is composed of 14 different subunits. Subunits NuoA, H, J, K, L, M, N constitute the membrane sector of the complex.

Its subcellular location is the cell membrane. It carries out the reaction a quinone + NADH + 5 H(+)(in) = a quinol + NAD(+) + 4 H(+)(out). In terms of biological role, NDH-1 shuttles electrons from NADH, via FMN and iron-sulfur (Fe-S) centers, to quinones in the respiratory chain. The immediate electron acceptor for the enzyme in this species is believed to be ubiquinone. Couples the redox reaction to proton translocation (for every two electrons transferred, four hydrogen ions are translocated across the cytoplasmic membrane), and thus conserves the redox energy in a proton gradient. This Herpetosiphon aurantiacus (strain ATCC 23779 / DSM 785 / 114-95) protein is NADH-quinone oxidoreductase subunit N 2.